Here is a 293-residue protein sequence, read N- to C-terminus: Pyridoxal 5'-phosphate synthase subunit PdxS (293 aa).

Aspartate 23 lines the D-ribose 5-phosphate pocket. The active-site Schiff-base intermediate with D-ribose 5-phosphate is lysine 80. Glycine 152 is a D-ribose 5-phosphate binding site. Arginine 164 is a D-glyceraldehyde 3-phosphate binding site. D-ribose 5-phosphate is bound by residues glycine 213 and 234 to 235 (GS).

It belongs to the PdxS/SNZ family. In the presence of PdxT, forms a dodecamer of heterodimers.

It catalyses the reaction aldehydo-D-ribose 5-phosphate + D-glyceraldehyde 3-phosphate + L-glutamine = pyridoxal 5'-phosphate + L-glutamate + phosphate + 3 H2O + H(+). Its pathway is cofactor biosynthesis; pyridoxal 5'-phosphate biosynthesis. Functionally, catalyzes the formation of pyridoxal 5'-phosphate from ribose 5-phosphate (RBP), glyceraldehyde 3-phosphate (G3P) and ammonia. The ammonia is provided by the PdxT subunit. Can also use ribulose 5-phosphate and dihydroxyacetone phosphate as substrates, resulting from enzyme-catalyzed isomerization of RBP and G3P, respectively. The sequence is that of Pyridoxal 5'-phosphate synthase subunit PdxS from Roseiflexus sp. (strain RS-1).